The following is a 213-amino-acid chain: Guanylate kinase (213 aa).

Positions 12–190 (GLCLVVAAPS…AIDQVRTILH (179 aa)) constitute a Guanylate kinase-like domain. Residue 19–26 (APSGAGKS) participates in ATP binding.

Belongs to the guanylate kinase family.

The protein resides in the cytoplasm. The catalysed reaction is GMP + ATP = GDP + ADP. Its function is as follows. Essential for recycling GMP and indirectly, cGMP. The polypeptide is Guanylate kinase (Granulibacter bethesdensis (strain ATCC BAA-1260 / CGDNIH1)).